We begin with the raw amino-acid sequence, 421 residues long: Probable indole-3-pyruvate monooxygenase YUCCA9 (421 aa).

29–34 (GAGPSG) serves as a coordination point for FAD. 196 to 201 (GCGNSG) provides a ligand contact to NADP(+).

It belongs to the FMO family. FAD is required as a cofactor.

The enzyme catalyses indole-3-pyruvate + NADPH + O2 + H(+) = (indol-3-yl)acetate + CO2 + NADP(+) + H2O. It participates in plant hormone metabolism; auxin biosynthesis. Functionally, involved in auxin biosynthesis. Belongs to the set of redundant YUCCA genes probably responsible for auxin biosynthesis in roots. In Arabidopsis thaliana (Mouse-ear cress), this protein is Probable indole-3-pyruvate monooxygenase YUCCA9 (YUC9).